The chain runs to 505 residues: Cytochrome P450 52C1 (505 aa).

A helical transmembrane segment spans residues 4 to 21; that stretch reads LFCFLAGIIVVYKAAQYY. Cys-453 lines the heme pocket.

The protein belongs to the cytochrome P450 family. It depends on heme as a cofactor.

It localises to the membrane. Functionally, together with an NADPH cytochrome P450 the enzyme system catalyzes the terminal hydroxylation as the first step in the assimilation of alkanes and fatty acids. In Candida tropicalis (Yeast), this protein is Cytochrome P450 52C1 (CYP52C1).